Consider the following 325-residue polypeptide: NADH-quinone oxidoreductase subunit H (325 aa).

Transmembrane regions (helical) follow at residues 11–31, 81–101, 114–134, 154–174, 186–206, 237–257, 265–285, and 304–324; these read ILLT…CGAF, VIFT…FAIV, IGIL…LFAG, LSYE…AGSF, VWNV…GVAV, FFVG…TLFF, LPPF…FILI, and ICLP…LWQA.

This sequence belongs to the complex I subunit 1 family. In terms of assembly, NDH-1 is composed of 13 different subunits. Subunits NuoA, H, J, K, L, M, N constitute the membrane sector of the complex.

The protein localises to the cell inner membrane. It carries out the reaction a quinone + NADH + 5 H(+)(in) = a quinol + NAD(+) + 4 H(+)(out). Functionally, NDH-1 shuttles electrons from NADH, via FMN and iron-sulfur (Fe-S) centers, to quinones in the respiratory chain. The immediate electron acceptor for the enzyme in this species is believed to be ubiquinone. Couples the redox reaction to proton translocation (for every two electrons transferred, four hydrogen ions are translocated across the cytoplasmic membrane), and thus conserves the redox energy in a proton gradient. This subunit may bind ubiquinone. The protein is NADH-quinone oxidoreductase subunit H of Shigella flexneri serotype 5b (strain 8401).